The primary structure comprises 230 residues: AA9 family lytic polysaccharide monooxygenase H (230 aa).

The signal sequence occupies residues 1-17 (MKTLSAGLLALASAASA). Positions 18 and 89 each coordinate Cu(2+). Cys-59 and Cys-178 are oxidised to a cystine. His-164 and Gln-173 together coordinate O2. Cu(2+) is bound at residue Tyr-175.

The protein belongs to the polysaccharide monooxygenase AA9 family. Cu(2+) serves as cofactor.

It localises to the secreted. The catalysed reaction is [(1-&gt;4)-beta-D-glucosyl]n+m + reduced acceptor + O2 = 4-dehydro-beta-D-glucosyl-[(1-&gt;4)-beta-D-glucosyl]n-1 + [(1-&gt;4)-beta-D-glucosyl]m + acceptor + H2O.. Lytic polysaccharide monooxygenase (LPMO) that depolymerizes crystalline and amorphous polysaccharides via the oxidation of scissile alpha- or beta-(1-4)-glycosidic bonds, yielding primarly C1 oxidation products. Catalysis by LPMOs requires the reduction of the active-site copper from Cu(II) to Cu(I) by a reducing agent and H(2)O(2) or O(2) as a cosubstrate. Active on hemicelluloses, including xylan, glucomannan, and xyloglucan. Preferentially cleaves residual xylan in phosphoric acid-swollen cellulose (PASC). Moreover, when exposed to cellulose-xylan blends, shows a preference for xylan and for releasing oxidized xylooligosaccharides. Has no activity on ivory nut mannan (INM), a linear beta-1,4-linked mannan without substitutions. This chain is AA9 family lytic polysaccharide monooxygenase H, found in Malbranchea cinnamomea (Thermophilic fungus).